The primary structure comprises 159 residues: Small ribosomal subunit protein uS9 (159 aa).

It belongs to the universal ribosomal protein uS9 family.

The chain is Small ribosomal subunit protein uS9 from Rickettsia africae (strain ESF-5).